We begin with the raw amino-acid sequence, 364 residues long: UDP-N-acetylglucosamine--N-acetylmuramyl-(pentapeptide) pyrophosphoryl-undecaprenol N-acetylglucosamine transferase (364 aa).

UDP-N-acetyl-alpha-D-glucosamine is bound by residues 15-17, Asn-123, Arg-164, Ser-191, and Gln-286; that span reads TGG.

Belongs to the glycosyltransferase 28 family. MurG subfamily.

It is found in the cell inner membrane. The catalysed reaction is di-trans,octa-cis-undecaprenyl diphospho-N-acetyl-alpha-D-muramoyl-L-alanyl-D-glutamyl-meso-2,6-diaminopimeloyl-D-alanyl-D-alanine + UDP-N-acetyl-alpha-D-glucosamine = di-trans,octa-cis-undecaprenyl diphospho-[N-acetyl-alpha-D-glucosaminyl-(1-&gt;4)]-N-acetyl-alpha-D-muramoyl-L-alanyl-D-glutamyl-meso-2,6-diaminopimeloyl-D-alanyl-D-alanine + UDP + H(+). It participates in cell wall biogenesis; peptidoglycan biosynthesis. In terms of biological role, cell wall formation. Catalyzes the transfer of a GlcNAc subunit on undecaprenyl-pyrophosphoryl-MurNAc-pentapeptide (lipid intermediate I) to form undecaprenyl-pyrophosphoryl-MurNAc-(pentapeptide)GlcNAc (lipid intermediate II). This is UDP-N-acetylglucosamine--N-acetylmuramyl-(pentapeptide) pyrophosphoryl-undecaprenol N-acetylglucosamine transferase from Prochlorococcus marinus (strain MIT 9515).